Consider the following 252-residue polypeptide: Aspartate/glutamate leucyltransferase (252 aa).

Belongs to the R-transferase family. Bpt subfamily.

It localises to the cytoplasm. It catalyses the reaction N-terminal L-glutamyl-[protein] + L-leucyl-tRNA(Leu) = N-terminal L-leucyl-L-glutamyl-[protein] + tRNA(Leu) + H(+). It carries out the reaction N-terminal L-aspartyl-[protein] + L-leucyl-tRNA(Leu) = N-terminal L-leucyl-L-aspartyl-[protein] + tRNA(Leu) + H(+). Its function is as follows. Functions in the N-end rule pathway of protein degradation where it conjugates Leu from its aminoacyl-tRNA to the N-termini of proteins containing an N-terminal aspartate or glutamate. The sequence is that of Aspartate/glutamate leucyltransferase from Afipia carboxidovorans (strain ATCC 49405 / DSM 1227 / KCTC 32145 / OM5) (Oligotropha carboxidovorans).